The sequence spans 539 residues: Transcription factor LG2 (539 aa).

Residues 115-125 show a composition bias toward polar residues; it reads MRQQQQLHSGN. 2 disordered regions span residues 115-140 and 181-246; these read MRQQQQLHSGNSQSVGSTTDSSSAQN and KPGL…KSRL. 2 stretches are compositionally biased toward low complexity: residues 126–137 and 192–205; these read SQSVGSTTDSSS and QQQHQLQHHQQQQL. A compositionally biased stretch (basic and acidic residues) spans 219–242; it reads TRKDGKSVDAKTERRLAQNREAAR. Residues 227–271 form the bZIP domain; sequence DAKTERRLAQNREAARKSRLRKKAYVQNLETSRVRLQQIEQELQR. The basic motif stretch occupies residues 229 to 249; that stretch reads KTERRLAQNREAARKSRLRKK. The leucine-zipper stretch occupies residues 255-269; it reads LETSRVRLQQIEQEL. The DOG1 domain occupies 292 to 506; sequence AAMFDMEYAR…RALSNLWSSR (215 aa). The disordered stretch occupies residues 513–539; the sequence is GTESVSPTGTELQPMHNQPQQNQYSGF.

The protein belongs to the bZIP family. In terms of assembly, interacts with NPR1/NH1 and NPR3/NH3.

Its subcellular location is the nucleus. In terms of biological role, transcriptional regulator involved in defense response. Acts as a transcriptional activator in vitro. The chain is Transcription factor LG2 from Oryza sativa subsp. japonica (Rice).